The following is a 309-amino-acid chain: DDRGK domain-containing protein 1 (309 aa).

Topologically, residues 1–2 (MD) are lumenal. The chain crosses the membrane as a helical span at residues 3–23 (LIILVGIASALLVVILTIFFL). Over 24-309 (QKKKGGTEAK…VSAGAGEGSS (286 aa)) the chain is Cytoplasmic. A disordered region spans residues 30 to 178 (TEAKEAAAPP…RLVKEERERK (149 aa)). Low complexity predominate over residues 53-84 (RRAQIARNQRNRLRQNAPAAAPAAAAALQAAD). Acidic residues predominate over residues 85 to 95 (AEGDNDDENPD). Over residues 107–178 (LDEKMGAKKR…RLVKEERERK (72 aa)) the composition is skewed to basic and acidic residues.

The protein belongs to the DDRGK1 family. As to quaternary structure, interacts with Atg9; the interaction is transient.

It is found in the endoplasmic reticulum membrane. Substrate adapter for ufmylation, the covalent attachment of the ubiquitin-like modifier UFM1 to substrate proteins. Required for ufmylation of Atg9; protects the nervous system during aging, possibly by stabilizing Atg9 and supporting its function. This chain is DDRGK domain-containing protein 1, found in Drosophila persimilis (Fruit fly).